Consider the following 185-residue polypeptide: Adenine phosphoribosyltransferase (185 aa).

This sequence belongs to the purine/pyrimidine phosphoribosyltransferase family. Homodimer.

It localises to the cytoplasm. The catalysed reaction is AMP + diphosphate = 5-phospho-alpha-D-ribose 1-diphosphate + adenine. Its pathway is purine metabolism; AMP biosynthesis via salvage pathway; AMP from adenine: step 1/1. In terms of biological role, catalyzes a salvage reaction resulting in the formation of AMP, that is energically less costly than de novo synthesis. This chain is Adenine phosphoribosyltransferase, found in Pectobacterium atrosepticum (strain SCRI 1043 / ATCC BAA-672) (Erwinia carotovora subsp. atroseptica).